The primary structure comprises 528 residues: Sulfhydryl oxidase 1 (528 aa).

A signal peptide spans 1–19; the sequence is MSLIHLFLLLGLLSLEAAA. Residues 35 to 170 enclose the Thioredoxin domain; that stretch reads NVADQKDNAI…LLNWINKQIG (136 aa). Residue Asn-47 is glycosylated (N-linked (GlcNAc...) asparagine). Catalysis depends on nucleophile residues Cys-72 and Cys-75. A disulfide bridge links Cys-72 with Cys-75. Asn-186 and Asn-297 each carry an N-linked (GlcNAc...) asparagine glycan. Cysteines 292 and 304 form a disulfide. One can recognise an ERV/ALR sulfhydryl oxidase domain in the interval 295–397; the sequence is SKNETRGFSC…GDPKFPKMIW (103 aa). Residues Arg-300, Trp-307, His-311, Asp-341, His-345, 368 to 375, Lys-394, and Trp-397 each bind FAD; that span reads WSTHNKVN. A disulfide bond links Cys-339 and Cys-342. An intrachain disulfide couples Cys-403 to Cys-406.

FAD serves as cofactor. Highly expressed in roots.

It localises to the secreted. It is found in the cell wall. The catalysed reaction is 2 R'C(R)SH + O2 = R'C(R)S-S(R)CR' + H2O2. Its function is as follows. Sulfhydryl oxidase involved in the regulation of cation homeostasis. Positively regulates shoot accumulation of K(+) and inhibits accumulation of toxic cations. Acts at the level of root K(+) efflux systems involved in xylem loading (root symplast-xylem interface). The polypeptide is Sulfhydryl oxidase 1 (QSOX1) (Arabidopsis thaliana (Mouse-ear cress)).